The primary structure comprises 403 residues: N-isopropylammelide isopropyl amidohydrolase (403 aa).

Zn(2+) is bound by residues His60, His62, and His217. The active-site Proton donor/acceptor is the His249. A Zn(2+)-binding site is contributed by Asp303.

This sequence belongs to the metallo-dependent hydrolases superfamily. N-acyl-D-amino-acid deacylase family. As to quaternary structure, homotetramer. Zn(2+) serves as cofactor.

It localises to the cytoplasm. The enzyme catalyses N-isopropylammelide + H2O + H(+) = isopropylamine + cyanurate. It functions in the pathway xenobiotic degradation; atrazine degradation; cyanurate from atrazine: step 3/3. With respect to regulation, inhibited by N-ethylammeline, N-hydroxyethylammeline, N-isopropylammeline, ammeline and 2-amino-4hydroxy-1,3,5-s-triazine. Transforms N-isopropylammelide to cyanuric acid and isopropylamine. The polypeptide is N-isopropylammelide isopropyl amidohydrolase (atzC) (Pseudomonas sp. (strain ADP)).